Reading from the N-terminus, the 238-residue chain is Ribonuclease PH (238 aa).

Phosphate contacts are provided by residues arginine 86 and 124 to 126; that span reads GTR.

This sequence belongs to the RNase PH family. As to quaternary structure, homohexameric ring arranged as a trimer of dimers.

It catalyses the reaction tRNA(n+1) + phosphate = tRNA(n) + a ribonucleoside 5'-diphosphate. Functionally, phosphorolytic 3'-5' exoribonuclease that plays an important role in tRNA 3'-end maturation. Removes nucleotide residues following the 3'-CCA terminus of tRNAs; can also add nucleotides to the ends of RNA molecules by using nucleoside diphosphates as substrates, but this may not be physiologically important. Probably plays a role in initiation of 16S rRNA degradation (leading to ribosome degradation) during starvation. This Shigella boydii serotype 18 (strain CDC 3083-94 / BS512) protein is Ribonuclease PH.